We begin with the raw amino-acid sequence, 225 residues long: Perlwapin-like protein (225 aa).

A signal peptide spans 1–19; it reads MNHLWLFIVTVSCIYLVYG. 4 disulfide bridges follow: Cys-27/Cys-57, Cys-36/Cys-61, Cys-43/Cys-56, and Cys-49/Cys-65. Residues 27-68 form the WAP 1; atypical domain; the sequence is CKVKFMGTACPLGRLVCEEDGDCLGVNQVCCYDGCGTTCHNK. N-linked (GlcNAc...) asparagine glycosylation occurs at Asn-67. Residues 117 to 169 enclose the WAP 2 domain; it reads IIPSPELLCPVVTVRYAFCRFSTYTPCHTSNDCAVPGMKCCPDVCGKRCKFPI. Disulfide bonds link Cys-125–Cys-157, Cys-135–Cys-161, Cys-143–Cys-156, and Cys-149–Cys-165. The N-linked (GlcNAc...) asparagine glycan is linked to Asn-170. Positions 176 to 225 are disordered; sequence QFQQTPLKPTVPLPQYQQTPLQPTVPSSQPPLQPTVPSPQSYNYKGACST. The span at 188 to 201 shows a compositional bias: low complexity; it reads LPQYQQTPLQPTVP. A compositionally biased stretch (pro residues) spans 203 to 212; that stretch reads SQPPLQPTVP. A compositionally biased stretch (polar residues) spans 213-225; that stretch reads SPQSYNYKGACST.

In terms of tissue distribution, component of the acid-soluble organic matrix of calcified layers of the shell (at protein level).

The protein resides in the secreted. This chain is Perlwapin-like protein, found in Lottia gigantea (Giant owl limpet).